A 1512-amino-acid chain; its full sequence is Lysophospholipase NTE1 (1512 aa).

Residues 1-48 (MAAPDAMTSLVKSSVALLSSAHESLPTSLAAMKTAETAPSSTFGILGR) lie on the Cytoplasmic side of the membrane. The helical transmembrane segment at 49-69 (VILSILSVLPTLLFWVSYTLP) threads the bilayer. Over 70–83 (TWLFTLFSMSLTFT) the chain is Lumenal. Residues 84–104 (MNFTTLMLVLVFVVSTISYFV) traverse the membrane as a helical segment. Residues 105–1512 (RYRYLTMYAR…RTMAPRRASI (1408 aa)) are Cytoplasmic-facing. Disordered regions lie at residues 204–230 (NREESDSDEDDGELQGESGGGSAQAHR), 262–362 (RHDE…AHPD), 534–556 (TQMSRGTGRSGRSSFSQPYQHDV), and 740–770 (TEDDLFGPPLQPTATNTSLRNGENSKKKRSR). Positions 208-217 (SDSDEDDGEL) are enriched in acidic residues. Polar residues predominate over residues 268–291 (GPSSSTPMSPQHRPSMTRNSSFNM). Over residues 343–358 (HSKQRRSPSRSTKPKS) the composition is skewed to basic residues. Low complexity predominate over residues 537 to 549 (SRGTGRSGRSSFS). Residues 669-793 (LSAS…SNRS) and 830-950 (RLTT…IASR) each bind a nucleoside 3',5'-cyclic phosphate. The span at 751-761 (PTATNTSLRNG) shows a compositional bias: polar residues. In terms of domain architecture, PNPLA spans 1209-1373 (LVLGGGGARG…IDNLTVAHMK (165 aa)). The GXGXXG motif lies at 1213-1218 (GGGARG). The GXSXG motif lies at 1240–1244 (GTSIG). Catalysis depends on Ser1242, which acts as the Nucleophile. Asp1360 functions as the Proton acceptor in the catalytic mechanism. The DGA/G motif lies at 1360–1362 (DGG).

The protein belongs to the NTE family.

The protein localises to the endoplasmic reticulum membrane. It carries out the reaction a 1-acyl-sn-glycero-3-phosphocholine + H2O = sn-glycerol 3-phosphocholine + a fatty acid + H(+). Inhibited by organophosphorus esters. Its function is as follows. Intracellular phospholipase B that catalyzes the double deacylation of phosphatidylcholine (PC) to glycerophosphocholine (GroPCho). Plays an important role in membrane lipid homeostasis. Responsible for the rapid PC turnover in response to inositol, elevated temperatures, or when choline is present in the growth medium. This is Lysophospholipase NTE1 (NTE1) from Phaeosphaeria nodorum (strain SN15 / ATCC MYA-4574 / FGSC 10173) (Glume blotch fungus).